A 363-amino-acid polypeptide reads, in one-letter code: NAD(P)H-quinone oxidoreductase subunit 1, chloroplastic (363 aa).

6 consecutive transmembrane segments (helical) span residues 27-47, 104-124, 127-147, 248-268, 300-320, and 343-363; these read VWLL…VLVI, IAVI…HLVL, LSIG…GLLM, YSGI…LVSS, VFGM…FLFI, and FLLP…LFSL.

The protein belongs to the complex I subunit 1 family. NDH is composed of at least 16 different subunits, 5 of which are encoded in the nucleus.

Its subcellular location is the plastid. It is found in the chloroplast thylakoid membrane. The enzyme catalyses a plastoquinone + NADH + (n+1) H(+)(in) = a plastoquinol + NAD(+) + n H(+)(out). It carries out the reaction a plastoquinone + NADPH + (n+1) H(+)(in) = a plastoquinol + NADP(+) + n H(+)(out). NDH shuttles electrons from NAD(P)H:plastoquinone, via FMN and iron-sulfur (Fe-S) centers, to quinones in the photosynthetic chain and possibly in a chloroplast respiratory chain. The immediate electron acceptor for the enzyme in this species is believed to be plastoquinone. Couples the redox reaction to proton translocation, and thus conserves the redox energy in a proton gradient. The polypeptide is NAD(P)H-quinone oxidoreductase subunit 1, chloroplastic (Ranunculus macranthus (Large buttercup)).